A 319-amino-acid chain; its full sequence is Zinc metalloproteinase/disintegrin (319 aa).

A propeptide spanning residues 1–28 (EDEAPKMCGVTQNWESYEPIKKASQSNL) is cleaved from the precursor. Residues 34–230 (RYIELVIVAD…QKPQCILNKP (197 aa)) enclose the Peptidase M12B domain. The Ca(2+) site is built by E37 and D121. Disulfide bonds link C145-C225, C185-C209, and C187-C192. Residue H170 coordinates Zn(2+). E171 is an active-site residue. 2 residues coordinate Zn(2+): H174 and H180. Ca(2+) is bound by residues C225 and N228. Residues 231-246 (LRTDTVSTPVSGNELL) constitute a propeptide that is removed on maturation. The Disintegrin domain maps to 238 to 319 (TPVSGNELLE…AGCPRNPFHA (82 aa)). Intrachain disulfides connect C252–C267, C254–C262, C261–C284, C275–C281, C280–C305, and C293–C312. Residues 297-299 (RGD) carry the Cell attachment site motif.

This sequence belongs to the venom metalloproteinase (M12B) family. P-II subfamily. P-IIa sub-subfamily. Monomer. Zn(2+) is required as a cofactor. Expressed by the venom gland.

Its subcellular location is the secreted. With respect to regulation, excess of calcium ions significantly suppress the autoproteolysis of the enzyme. Its function is as follows. metalloproteinase that impairs hemostasis in the envenomed animal. Shows autoproteolysis dependent on pH and temperature. Does not show hemorrhagic activity. Inhibits platelet aggregation induced by ADP (IC(50) is 200 nM), collagen (IC(50) is 500 nM), thrombin and epinephrin (IC(50) is 300 nM). Does not inhibit aggregation induced by ristocetin. In terms of biological role, inhibits platelet aggregation induced by ADP (IC(50) is 100 nM), collagen (IC(50) is 500 nM), thrombin and epinephrin (IC(50) is 300 nM). Does not inhibit aggregation induced by ristocetin. Significantly inhibits angiogenesis both in vivo and in vitro. The protein is Zinc metalloproteinase/disintegrin of Gloydius brevicauda (Korean slamosa snake).